Consider the following 494-residue polypeptide: NADH-quinone oxidoreductase subunit N (494 aa).

A run of 14 helical transmembrane segments spans residues 13 to 33 (LIAL…MLAI), 43 to 63 (FVLT…AMGV), 82 to 102 (MALV…YLGG), 117 to 137 (LLIL…HLVG), 138 to 158 (LFIG…YAFF), 169 to 189 (YMVL…LLYA), 209 to 229 (LLVE…LSLV), 243 to 263 (PAPV…AVLL), 277 to 297 (LNEL…LLAL), 311 to 331 (IAHF…AVEA), 332 to 352 (IGVY…VITL), 380 to 400 (AVLT…GFIG), 412 to 432 (QLWW…FYYL), and 461 to 481 (IMLL…QPLL).

This sequence belongs to the complex I subunit 2 family. NDH-1 is composed of 13 different subunits. Subunits NuoA, H, J, K, L, M, N constitute the membrane sector of the complex.

The protein localises to the cell inner membrane. The enzyme catalyses a quinone + NADH + 5 H(+)(in) = a quinol + NAD(+) + 4 H(+)(out). Functionally, NDH-1 shuttles electrons from NADH, via FMN and iron-sulfur (Fe-S) centers, to quinones in the respiratory chain. The immediate electron acceptor for the enzyme in this species is believed to be ubiquinone. Couples the redox reaction to proton translocation (for every two electrons transferred, four hydrogen ions are translocated across the cytoplasmic membrane), and thus conserves the redox energy in a proton gradient. This Ectopseudomonas mendocina (strain ymp) (Pseudomonas mendocina) protein is NADH-quinone oxidoreductase subunit N.